A 522-amino-acid chain; its full sequence is Cytochrome P450 4e5, mitochondrial (522 aa).

Residues E307 and C443 each coordinate heme.

This sequence belongs to the cytochrome P450 family. It depends on heme as a cofactor.

The protein resides in the mitochondrion. Probably involved in steroid hormones biosynthesis. This Drosophila mettleri (Fruit fly) protein is Cytochrome P450 4e5, mitochondrial (Cyp4e5).